A 273-amino-acid chain; its full sequence is Tryptophan synthase alpha chain (273 aa).

Active-site proton acceptor residues include Glu49 and Asp60.

The protein belongs to the TrpA family. In terms of assembly, tetramer of two alpha and two beta chains.

The enzyme catalyses (1S,2R)-1-C-(indol-3-yl)glycerol 3-phosphate + L-serine = D-glyceraldehyde 3-phosphate + L-tryptophan + H2O. It functions in the pathway amino-acid biosynthesis; L-tryptophan biosynthesis; L-tryptophan from chorismate: step 5/5. Functionally, the alpha subunit is responsible for the aldol cleavage of indoleglycerol phosphate to indole and glyceraldehyde 3-phosphate. This is Tryptophan synthase alpha chain from Albidiferax ferrireducens (strain ATCC BAA-621 / DSM 15236 / T118) (Rhodoferax ferrireducens).